The following is a 107-amino-acid chain: UPF0145 protein YbjQ (107 aa).

This sequence belongs to the UPF0145 family.

The protein is UPF0145 protein YbjQ of Shigella flexneri.